The primary structure comprises 495 residues: Probable aspartic-type endopeptidase OPSB (495 aa).

The first 19 residues, 1-19 (MRGDSFIWSLATAIPLLST), serve as a signal peptide directing secretion. The Peptidase A1 domain occupies 73-408 (YFCNLTLGTP…DLDNNEISIA (336 aa)). A glycan (N-linked (GlcNAc...) asparagine) is linked at asparagine 76. Aspartate 91 is a catalytic residue. N-linked (GlcNAc...) asparagine glycosylation is present at asparagine 136. Residue aspartate 290 is part of the active site. Asparagine 413 carries an N-linked (GlcNAc...) asparagine glycan. Residues 448–470 (TGLPGVETGVPGSRPPSSKAAGQ) are disordered. Residue alanine 467 is the site of GPI-anchor amidated alanine attachment. A propeptide spans 468 to 495 (AGQAKRPDFVLGVAAVGLAGAGMLFAAM) (removed in mature form).

This sequence belongs to the peptidase A1 family.

It localises to the cell membrane. In terms of biological role, probable GPI-anchored aspartic-type endopeptidase which contributes to virulence. The sequence is that of Probable aspartic-type endopeptidase OPSB (OPSB) from Trichophyton verrucosum (strain HKI 0517).